We begin with the raw amino-acid sequence, 142 residues long: Small ribosomal subunit protein uS12 (142 aa).

Positions 1–30 (MGKTHGMGAARKLKSHRRTQRWADKSYKKS) are disordered. Residues 11–20 (RKLKSHRRTQ) show a composition bias toward basic residues. The segment covering 21–30 (RWADKSYKKS) has biased composition (basic and acidic residues). P61 bears the Hydroxyproline mark.

It belongs to the universal ribosomal protein uS12 family.

This chain is Small ribosomal subunit protein uS12 (RPS23), found in Euphorbia esula (Leafy spurge).